Reading from the N-terminus, the 606-residue chain is NADH-ubiquinone oxidoreductase chain 5 (606 aa).

The next 15 membrane-spanning stretches (helical) occupy residues 3–23 (VINLIPTLMLTSLIILTLPII), 38–58 (ITKTAVTYAFAISLIPTLLFI), 87–107 (FFSLTFMPIALFITWSIMEFS), 124–144 (LLLFLITMLILVSANNLLQLF), 180–200 (IGDMGFIMMMAWFTIHLNSWE), 216–236 (LLGLLLASAGKSAQFGLHPWL), 244–264 (TPVSALLHSSTMVMAGVFTLI), 276–296 (IQTSTLCLGAITTLFTAICAL), 304–323 (IIALSTSSQLGLMMVTIGIN), 328–350 (AFIHMCTHAFFKAMLFLSSGSII), 369–389 (MPITSTAIIIGSLALTGMPFL), 404–424 (MSYINTWALLITLIAVSMTAS), 460–480 (LILGSIFMGFLISMNTIPHTT), 483–503 (MTMPPHLKFMALAVTLLGFTV), and 586–606 (LMKLYFLSFLLSITLGLLIAL).

This sequence belongs to the complex I subunit 5 family. As to quaternary structure, core subunit of respiratory chain NADH dehydrogenase (Complex I) which is composed of 45 different subunits.

It localises to the mitochondrion inner membrane. It carries out the reaction a ubiquinone + NADH + 5 H(+)(in) = a ubiquinol + NAD(+) + 4 H(+)(out). Its function is as follows. Core subunit of the mitochondrial membrane respiratory chain NADH dehydrogenase (Complex I) which catalyzes electron transfer from NADH through the respiratory chain, using ubiquinone as an electron acceptor. Essential for the catalytic activity and assembly of complex I. The chain is NADH-ubiquinone oxidoreductase chain 5 (MT-ND5) from Loxodonta africana (African elephant).